The sequence spans 227 residues: Translation initiation factor 6 (227 aa).

The protein belongs to the eIF-6 family.

Binds to the 50S ribosomal subunit and prevents its association with the 30S ribosomal subunit to form the 70S initiation complex. The sequence is that of Translation initiation factor 6 from Methanococcus maripaludis (strain C6 / ATCC BAA-1332).